The chain runs to 616 residues: Chaperone protein HscA (616 aa).

Belongs to the heat shock protein 70 family.

Chaperone involved in the maturation of iron-sulfur cluster-containing proteins. Has a low intrinsic ATPase activity which is markedly stimulated by HscB. Involved in the maturation of IscU. The sequence is that of Chaperone protein HscA from Proteus mirabilis (strain HI4320).